We begin with the raw amino-acid sequence, 250 residues long: 1-(5-phosphoribosyl)-5-[(5-phosphoribosylamino)methylideneamino] imidazole-4-carboxamide isomerase (250 aa).

Catalysis depends on D10, which acts as the Proton acceptor. D131 (proton donor) is an active-site residue.

Belongs to the HisA/HisF family.

It localises to the cytoplasm. The catalysed reaction is 1-(5-phospho-beta-D-ribosyl)-5-[(5-phospho-beta-D-ribosylamino)methylideneamino]imidazole-4-carboxamide = 5-[(5-phospho-1-deoxy-D-ribulos-1-ylimino)methylamino]-1-(5-phospho-beta-D-ribosyl)imidazole-4-carboxamide. It participates in amino-acid biosynthesis; L-histidine biosynthesis; L-histidine from 5-phospho-alpha-D-ribose 1-diphosphate: step 4/9. This Desulfitobacterium hafniense (strain DSM 10664 / DCB-2) protein is 1-(5-phosphoribosyl)-5-[(5-phosphoribosylamino)methylideneamino] imidazole-4-carboxamide isomerase.